The primary structure comprises 524 residues: Chromosomal replication initiator protein DnaA (524 aa).

The tract at residues 1–73 (MELPESAWEQ…DELLSSADHH (73 aa)) is domain I, interacts with DnaA modulators. The tract at residues 73-187 (HPITSVEISV…DVEGGLQHKS (115 aa)) is domain II. 3 stretches are compositionally biased toward polar residues: residues 86 to 95 (RSTSFETNQG), 106 to 126 (APRQ…QPQQ), and 153 to 165 (NGYN…QPYN). A disordered region spans residues 86–173 (RSTSFETNQG…YNDNPMGQGK (88 aa)). A domain III, AAA+ region region spans residues 188 to 404 (NLNPTFIFDN…GALKRVIANA (217 aa)). Positions 232, 234, 235, and 236 each coordinate ATP. Positions 405-524 (HFTGRDISVE…VKNLLRTLTT (120 aa)) are domain IV, binds dsDNA.

This sequence belongs to the DnaA family. Oligomerizes as a right-handed, spiral filament on DNA at oriC.

It localises to the cytoplasm. Plays an essential role in the initiation and regulation of chromosomal replication. ATP-DnaA binds to the origin of replication (oriC) to initiate formation of the DNA replication initiation complex once per cell cycle. Binds the DnaA box (a 9 base pair repeat at the origin) and separates the double-stranded (ds)DNA. Forms a right-handed helical filament on oriC DNA; dsDNA binds to the exterior of the filament while single-stranded (ss)DNA is stabiized in the filament's interior. The ATP-DnaA-oriC complex binds and stabilizes one strand of the AT-rich DNA unwinding element (DUE), permitting loading of DNA polymerase. After initiation quickly degrades to an ADP-DnaA complex that is not apt for DNA replication. Binds acidic phospholipids. The protein is Chromosomal replication initiator protein DnaA of Saccharophagus degradans (strain 2-40 / ATCC 43961 / DSM 17024).